A 522-amino-acid polypeptide reads, in one-letter code: Glutamyl-tRNA(Gln) amidotransferase subunit A (522 aa).

Catalysis depends on charge relay system residues Lys-88 and Ser-163. Ser-187 functions as the Acyl-ester intermediate in the catalytic mechanism.

It belongs to the amidase family. GatA subfamily. In terms of assembly, heterotrimer of A, B and C subunits.

The catalysed reaction is L-glutamyl-tRNA(Gln) + L-glutamine + ATP + H2O = L-glutaminyl-tRNA(Gln) + L-glutamate + ADP + phosphate + H(+). Its function is as follows. Allows the formation of correctly charged Gln-tRNA(Gln) through the transamidation of misacylated Glu-tRNA(Gln) in organisms which lack glutaminyl-tRNA synthetase. The reaction takes place in the presence of glutamine and ATP through an activated gamma-phospho-Glu-tRNA(Gln). The sequence is that of Glutamyl-tRNA(Gln) amidotransferase subunit A from Paenarthrobacter aurescens (strain TC1).